The primary structure comprises 316 residues: Pantothenate kinase (316 aa).

Position 95 to 102 (95 to 102 (GSVAVGKS)) interacts with ATP.

It belongs to the prokaryotic pantothenate kinase family.

It is found in the cytoplasm. The enzyme catalyses (R)-pantothenate + ATP = (R)-4'-phosphopantothenate + ADP + H(+). It functions in the pathway cofactor biosynthesis; coenzyme A biosynthesis; CoA from (R)-pantothenate: step 1/5. This chain is Pantothenate kinase, found in Shewanella pealeana (strain ATCC 700345 / ANG-SQ1).